Reading from the N-terminus, the 186-residue chain is Pyridoxal 5'-phosphate synthase subunit PdxT (186 aa).

46–48 is an L-glutamine binding site; the sequence is GES. The active-site Nucleophile is the Cys75. L-glutamine is bound by residues Arg101 and 127–128; that span reads IR. Catalysis depends on charge relay system residues His164 and Glu166.

This sequence belongs to the glutaminase PdxT/SNO family. As to quaternary structure, in the presence of PdxS, forms a dodecamer of heterodimers. Only shows activity in the heterodimer.

The enzyme catalyses aldehydo-D-ribose 5-phosphate + D-glyceraldehyde 3-phosphate + L-glutamine = pyridoxal 5'-phosphate + L-glutamate + phosphate + 3 H2O + H(+). It carries out the reaction L-glutamine + H2O = L-glutamate + NH4(+). The protein operates within cofactor biosynthesis; pyridoxal 5'-phosphate biosynthesis. Catalyzes the hydrolysis of glutamine to glutamate and ammonia as part of the biosynthesis of pyridoxal 5'-phosphate. The resulting ammonia molecule is channeled to the active site of PdxS. The sequence is that of Pyridoxal 5'-phosphate synthase subunit PdxT from Methanococcus aeolicus (strain ATCC BAA-1280 / DSM 17508 / OCM 812 / Nankai-3).